The sequence spans 321 residues: Cytochrome f (321 aa).

An N-terminal signal peptide occupies residues 1-35 (MQNTNTLNWINKLIYLSISIPIFFLILVTTYPNSV). 4 residues coordinate heme: Tyr-38, Cys-58, Cys-61, and His-62. Residues 287–307 (MEGLILFFISVILAQVFLVLK) form a helical membrane-spanning segment.

The protein belongs to the cytochrome f family. As to quaternary structure, the 4 large subunits of the cytochrome b6-f complex are cytochrome b6, subunit IV (17 kDa polypeptide, petD), cytochrome f and the Rieske protein, while the 4 small subunits are PetG, PetL, PetM and PetN. The complex functions as a dimer. The cofactor is heme.

The protein resides in the plastid. The protein localises to the chloroplast thylakoid membrane. Its function is as follows. Component of the cytochrome b6-f complex, which mediates electron transfer between photosystem II (PSII) and photosystem I (PSI), cyclic electron flow around PSI, and state transitions. The chain is Cytochrome f from Chara vulgaris (Common stonewort).